A 483-amino-acid polypeptide reads, in one-letter code: Betaine aldehyde dehydrogenase (483 aa).

K(+) contacts are provided by isoleucine 27 and aspartate 93. 149 to 151 (GAW) contacts NAD(+). Lysine 161 (charge relay system) is an active-site residue. Residue 175–178 (KPSE) coordinates NAD(+). Valine 179 contacts K(+). An NAD(+)-binding site is contributed by 228–231 (SVPT). Valine 243 contacts K(+). The Proton acceptor role is filled by glutamate 249. NAD(+) is bound by residues glycine 251, cysteine 283, and glutamate 380. Cysteine 283 (nucleophile) is an active-site residue. The residue at position 283 (cysteine 283) is a Cysteine sulfenic acid (-SOH). K(+) contacts are provided by lysine 450 and glycine 453. The Charge relay system role is filled by glutamate 457.

This sequence belongs to the aldehyde dehydrogenase family. As to quaternary structure, dimer of dimers. The cofactor is K(+).

The catalysed reaction is betaine aldehyde + NAD(+) + H2O = glycine betaine + NADH + 2 H(+). It participates in amine and polyamine biosynthesis; betaine biosynthesis via choline pathway; betaine from betaine aldehyde: step 1/1. In terms of biological role, involved in the biosynthesis of the osmoprotectant glycine betaine. Catalyzes the irreversible oxidation of betaine aldehyde to the corresponding acid. In Cereibacter sphaeroides (strain ATCC 17029 / ATH 2.4.9) (Rhodobacter sphaeroides), this protein is Betaine aldehyde dehydrogenase.